We begin with the raw amino-acid sequence, 505 residues long: Cytochrome P450 2K6 (505 aa).

A helical membrane pass occupies residues 7–27 (FLLQGSPTGTILGALLLFLVI). Cys448 is a heme binding site.

Belongs to the cytochrome P450 family. It depends on heme as a cofactor. Detected in liver and ovary.

It is found in the endoplasmic reticulum membrane. It localises to the microsome membrane. Its function is as follows. Metabolizes aflatoxin B1 (AFB1) to the cytotoxic derivative AFB1 exo-8,9-epoxide. Does not show activity towards lauric acid. The polypeptide is Cytochrome P450 2K6 (Danio rerio (Zebrafish)).